Reading from the N-terminus, the 354-residue chain is Uroporphyrinogen decarboxylase (354 aa).

Substrate-binding positions include 27–31, D77, Y153, T208, and H326; that span reads RQAGR.

This sequence belongs to the uroporphyrinogen decarboxylase family. In terms of assembly, homodimer.

It localises to the cytoplasm. The catalysed reaction is uroporphyrinogen III + 4 H(+) = coproporphyrinogen III + 4 CO2. The protein operates within porphyrin-containing compound metabolism; protoporphyrin-IX biosynthesis; coproporphyrinogen-III from 5-aminolevulinate: step 4/4. Its function is as follows. Catalyzes the decarboxylation of four acetate groups of uroporphyrinogen-III to yield coproporphyrinogen-III. The chain is Uroporphyrinogen decarboxylase from Neisseria meningitidis serogroup C (strain 053442).